The sequence spans 141 residues: Endoribonuclease YbeY (141 aa).

Positions 107, 111, and 117 each coordinate Zn(2+).

The protein belongs to the endoribonuclease YbeY family. Zn(2+) serves as cofactor.

It is found in the cytoplasm. Functionally, single strand-specific metallo-endoribonuclease involved in late-stage 70S ribosome quality control and in maturation of the 3' terminus of the 16S rRNA. The chain is Endoribonuclease YbeY from Endomicrobium trichonymphae.